Reading from the N-terminus, the 20-residue chain is Thylakoid lumenal 18.4 kDa protein (20 aa).

Its subcellular location is the plastid. The protein localises to the chloroplast thylakoid lumen. In Spinacia oleracea (Spinach), this protein is Thylakoid lumenal 18.4 kDa protein.